A 344-amino-acid polypeptide reads, in one-letter code: Tetraacyldisaccharide 4'-kinase (344 aa).

An ATP-binding site is contributed by 65-72 (HAGGTGKT).

Belongs to the LpxK family.

It catalyses the reaction a lipid A disaccharide + ATP = a lipid IVA + ADP + H(+). The protein operates within glycolipid biosynthesis; lipid IV(A) biosynthesis; lipid IV(A) from (3R)-3-hydroxytetradecanoyl-[acyl-carrier-protein] and UDP-N-acetyl-alpha-D-glucosamine: step 6/6. Transfers the gamma-phosphate of ATP to the 4'-position of a tetraacyldisaccharide 1-phosphate intermediate (termed DS-1-P) to form tetraacyldisaccharide 1,4'-bis-phosphate (lipid IVA). The sequence is that of Tetraacyldisaccharide 4'-kinase from Neisseria meningitidis serogroup A / serotype 4A (strain DSM 15465 / Z2491).